Reading from the N-terminus, the 204-residue chain is Guanylate kinase (204 aa).

One can recognise a Guanylate kinase-like domain in the interval 6-184; sequence GLLIVLSGPA…AVDRIKAIVT (179 aa). An ATP-binding site is contributed by 13 to 20; that stretch reads GPAGVGKG.

This sequence belongs to the guanylate kinase family.

It is found in the cytoplasm. It catalyses the reaction GMP + ATP = GDP + ADP. Essential for recycling GMP and indirectly, cGMP. The polypeptide is Guanylate kinase (gmk) (Halalkalibacterium halodurans (strain ATCC BAA-125 / DSM 18197 / FERM 7344 / JCM 9153 / C-125) (Bacillus halodurans)).